The sequence spans 243 residues: ATP-dependent dethiobiotin synthetase BioD (243 aa).

Residue 12–17 coordinates ATP; sequence DVGKTF. Mg(2+) is bound at residue T16. The active site involves K37. A substrate-binding site is contributed by S41. ATP-binding positions include D54, 115–118, and 179–180; these read EGCG and NM. Positions 54 and 115 each coordinate Mg(2+).

Belongs to the dethiobiotin synthetase family. In terms of assembly, homodimer. Requires Mg(2+) as cofactor.

It localises to the cytoplasm. The catalysed reaction is (7R,8S)-7,8-diammoniononanoate + CO2 + ATP = (4R,5S)-dethiobiotin + ADP + phosphate + 3 H(+). Its pathway is cofactor biosynthesis; biotin biosynthesis; biotin from 7,8-diaminononanoate: step 1/2. In terms of biological role, catalyzes a mechanistically unusual reaction, the ATP-dependent insertion of CO2 between the N7 and N8 nitrogen atoms of 7,8-diaminopelargonic acid (DAPA, also called 7,8-diammoniononanoate) to form a ureido ring. This chain is ATP-dependent dethiobiotin synthetase BioD, found in Caldicellulosiruptor bescii (strain ATCC BAA-1888 / DSM 6725 / KCTC 15123 / Z-1320) (Anaerocellum thermophilum).